Reading from the N-terminus, the 348-residue chain is Phosphoribosylformylglycinamidine cyclo-ligase (348 aa).

Belongs to the AIR synthase family.

Its subcellular location is the cytoplasm. The catalysed reaction is 2-formamido-N(1)-(5-O-phospho-beta-D-ribosyl)acetamidine + ATP = 5-amino-1-(5-phospho-beta-D-ribosyl)imidazole + ADP + phosphate + H(+). It participates in purine metabolism; IMP biosynthesis via de novo pathway; 5-amino-1-(5-phospho-D-ribosyl)imidazole from N(2)-formyl-N(1)-(5-phospho-D-ribosyl)glycinamide: step 2/2. This Citrifermentans bemidjiense (strain ATCC BAA-1014 / DSM 16622 / JCM 12645 / Bem) (Geobacter bemidjiensis) protein is Phosphoribosylformylglycinamidine cyclo-ligase.